Consider the following 37-residue polypeptide: Potassium channel toxin alpha-KTx 4.3 (37 aa).

Cystine bridges form between Cys-7–Cys-28, Cys-13–Cys-33, and Cys-17–Cys-35. The interaction with Ca(2+)-activated K(+) channels stretch occupies residues 26–33 (GKCMNGKC).

Expressed by the venom gland.

The protein resides in the secreted. Functionally, blocks reversibly Shaker B potassium-channels. This is Potassium channel toxin alpha-KTx 4.3 from Tityus discrepans (Venezuelan scorpion).